Here is a 151-residue protein sequence, read N- to C-terminus: Large ribosomal subunit protein eL19 (151 aa).

Positions 62–93 (RLKERRKKRSLKSEGKKSGSRKGKKGARANSK) are disordered. The segment covering 79 to 88 (SGSRKGKKGA) has biased composition (basic residues).

This sequence belongs to the eukaryotic ribosomal protein eL19 family. Part of the 50S ribosomal subunit.

Binds to the 23S rRNA. In Saccharolobus solfataricus (strain ATCC 35092 / DSM 1617 / JCM 11322 / P2) (Sulfolobus solfataricus), this protein is Large ribosomal subunit protein eL19.